We begin with the raw amino-acid sequence, 347 residues long: MKPPILIIILSTVISGTMIVLTSSHWLLTWIGFEMNMLAIIPILMKKFNPRAMEASTKYFLTQATASMLLMMGIIINLLYSGQWTVSKNLHPMASTMMTIAMTMKLGLAPFHFWVPEVTQGIPLSSGMILLTWQKIAPLSVLYQISPSINTNLLMTMATMSVLIGGWGGLNQTQLRKILAYSSIAHMGWMVAIMTYNPTVMILNLMMYIMMTLTSFMLFIHTSATTTLSLSHTWNKTPLITSFILVLMLSLGGLPPLSGFIPKWMIIQELTKNEMIILPTLLAITALLNLYFYMRLTYATALTMFPSTNNMKMKWQFERTKKMALLPPLIIISTMLLPLTPMMSILD.

10 helical membrane-spanning segments follow: residues 3–23, 25–45, 59–79, 93–115, 149–169, 178–198, 200–220, 242–262, 274–294, and 323–343; these read PPILIIILSTVISGTMIVLTS, HWLLTWIGFEMNMLAIIPILM, YFLTQATASMLLMMGIIINLL, MASTMMTIAMTMKLGLAPFHFWV, INTNLLMTMATMSVLIGGWGG, ILAYSSIAHMGWMVAIMTYNP, VMILNLMMYIMMTLTSFMLFI, SFILVLMLSLGGLPPLSGFIP, EMIILPTLLAITALLNLYFYM, and MALLPPLIIISTMLLPLTPMM.

This sequence belongs to the complex I subunit 2 family. In terms of assembly, core subunit of respiratory chain NADH dehydrogenase (Complex I) which is composed of 45 different subunits. Interacts with TMEM242.

It is found in the mitochondrion inner membrane. The catalysed reaction is a ubiquinone + NADH + 5 H(+)(in) = a ubiquinol + NAD(+) + 4 H(+)(out). Its function is as follows. Core subunit of the mitochondrial membrane respiratory chain NADH dehydrogenase (Complex I) which catalyzes electron transfer from NADH through the respiratory chain, using ubiquinone as an electron acceptor. Essential for the catalytic activity and assembly of complex I. The sequence is that of NADH-ubiquinone oxidoreductase chain 2 from Nandinia binotata (African palm civet).